We begin with the raw amino-acid sequence, 425 residues long: Glutamyl-tRNA reductase (425 aa).

Substrate is bound by residues 51 to 54 (TCNR), Ser-111, 116 to 118 (DMQ), and Gln-122. Residue Cys-52 is the Nucleophile of the active site. Residue 191–196 (GLGEIG) coordinates NADP(+).

It belongs to the glutamyl-tRNA reductase family. Homodimer.

The enzyme catalyses (S)-4-amino-5-oxopentanoate + tRNA(Glu) + NADP(+) = L-glutamyl-tRNA(Glu) + NADPH + H(+). The protein operates within porphyrin-containing compound metabolism; protoporphyrin-IX biosynthesis; 5-aminolevulinate from L-glutamyl-tRNA(Glu): step 1/2. Its function is as follows. Catalyzes the NADPH-dependent reduction of glutamyl-tRNA(Glu) to glutamate 1-semialdehyde (GSA). This is Glutamyl-tRNA reductase from Cytophaga hutchinsonii (strain ATCC 33406 / DSM 1761 / CIP 103989 / NBRC 15051 / NCIMB 9469 / D465).